Consider the following 279-residue polypeptide: MVDHLANTEINSQRIAAVENCFGASGQPLALPGRVLLGEGVLTKECRKKAKPRIFFLFNDILVYGSIVLSKRKYRSQHIIPLEEVTLEPLPETLQAKNRWMIKTAKKSFVVSAASTTERQEWISHIEECVRRQLLATGRQPTTEHAAPWIPDKATDICMRCTQTRFSALTRRHHCRKCGFVVCAECSRERFLLPRLSPKPLRVCSLCYRELAAQKRREEAKERFRGSPGQLTHLGSTMCGASSGDDDDSDEDREGSGDGDWPTQVEFYASGVSWSAFHS.

Positions 35-131 (VLLGEGVLTK…WISHIEECVR (97 aa)) constitute a PH domain. The FYVE-type zinc-finger motif lies at 152–212 (DKATDICMRC…VCSLCYRELA (61 aa)). Cys-158, Cys-161, Cys-175, Cys-178, Cys-183, Cys-186, Cys-204, and Cys-207 together coordinate Zn(2+). Positions 219-264 (EAKERFRGSPGQLTHLGSTMCGASSGDDDDSDEDREGSGDGDWPTQ) are disordered. Residues 244-253 (GDDDDSDEDR) show a composition bias toward acidic residues.

The protein resides in the nucleus. The protein localises to the cytoplasm. It is found in the perinuclear region. It localises to the lysosome. In terms of biological role, may induce apoptosis through the lysosomal-mitochondrial pathway. Translocates to the lysosome initiating the permeabilization of lysosomal membrane (LMP) and resulting in the release of CTSD and CTSL to the cytoplasm. Triggers the caspase-independent apoptosis by altering mitochondrial membrane permeabilization (MMP) resulting in the release of PDCD8. This is Pleckstrin homology domain-containing family F member 1 (Plekhf1) from Rattus norvegicus (Rat).